The primary structure comprises 517 residues: Maturase K (517 aa).

This sequence belongs to the intron maturase 2 family. MatK subfamily.

The protein resides in the plastid. It is found in the chloroplast. Its function is as follows. Usually encoded in the trnK tRNA gene intron. Probably assists in splicing its own and other chloroplast group II introns. The protein is Maturase K of Paris tetraphylla.